The primary structure comprises 184 residues: ATP synthase subunit b, chloroplastic (184 aa).

Residues 31–53 traverse the membrane as a helical segment; that stretch reads LINLAVVIGVLVYFGKGVLTTIL.

This sequence belongs to the ATPase B chain family. As to quaternary structure, F-type ATPases have 2 components, F(1) - the catalytic core - and F(0) - the membrane proton channel. F(1) has five subunits: alpha(3), beta(3), gamma(1), delta(1), epsilon(1). F(0) has four main subunits: a(1), b(1), b'(1) and c(10-14). The alpha and beta chains form an alternating ring which encloses part of the gamma chain. F(1) is attached to F(0) by a central stalk formed by the gamma and epsilon chains, while a peripheral stalk is formed by the delta, b and b' chains.

The protein localises to the plastid. It localises to the chloroplast thylakoid membrane. F(1)F(0) ATP synthase produces ATP from ADP in the presence of a proton or sodium gradient. F-type ATPases consist of two structural domains, F(1) containing the extramembraneous catalytic core and F(0) containing the membrane proton channel, linked together by a central stalk and a peripheral stalk. During catalysis, ATP synthesis in the catalytic domain of F(1) is coupled via a rotary mechanism of the central stalk subunits to proton translocation. Its function is as follows. Component of the F(0) channel, it forms part of the peripheral stalk, linking F(1) to F(0). The chain is ATP synthase subunit b, chloroplastic from Staurastrum punctulatum (Green alga).